Consider the following 868-residue polypeptide: Probable inorganic carbon transporter subunit DabA (868 aa).

Positions 392, 394, 574, and 589 each coordinate Zn(2+).

Belongs to the inorganic carbon transporter (TC 9.A.2) DabA family. Forms a complex with DabB. It depends on Zn(2+) as a cofactor.

The protein localises to the cell membrane. In terms of biological role, part of an energy-coupled inorganic carbon pump. The chain is Probable inorganic carbon transporter subunit DabA from Bacillus cereus (strain B4264).